Here is a 442-residue protein sequence, read N- to C-terminus: F-box only protein 39 (442 aa).

An F-box domain is found at 16–61 (WAFLPDLCLCRVFWWLGDRDRSRAALVCRKWNQMMYSAELWRYRTI).

As to quaternary structure, directly interacts with SKP1 and CUL1.

Functionally, substrate-recognition component of the SCF (SKP1-CUL1-F-box protein)-type E3 ubiquitin ligase complex. The polypeptide is F-box only protein 39 (FBXO39) (Homo sapiens (Human)).